We begin with the raw amino-acid sequence, 287 residues long: uncharacterized protein (287 aa).

The 107-residue stretch at 133-239 folds into the THUMP domain; it reads CEVGKTKKMT…KNIIGISIVQ (107 aa). The tract at residues 257-287 is disordered; the sequence is ENTKSIPNDSKLDNFDRDKNQIINDKAEHAE. Positions 266-287 are enriched in basic and acidic residues; the sequence is SKLDNFDRDKNQIINDKAEHAE.

This is an uncharacterized protein from Schizosaccharomyces pombe (strain 972 / ATCC 24843) (Fission yeast).